The chain runs to 513 residues: Histidine ammonia-lyase (513 aa).

Positions 142–144 (ASG) form a cross-link, 5-imidazolinone (Ala-Gly). Ser143 carries the post-translational modification 2,3-didehydroalanine (Ser).

The protein belongs to the PAL/histidase family. Contains an active site 4-methylidene-imidazol-5-one (MIO), which is formed autocatalytically by cyclization and dehydration of residues Ala-Ser-Gly.

The protein localises to the cytoplasm. The enzyme catalyses L-histidine = trans-urocanate + NH4(+). It participates in amino-acid degradation; L-histidine degradation into L-glutamate; N-formimidoyl-L-glutamate from L-histidine: step 1/3. This chain is Histidine ammonia-lyase, found in Hyphomonas neptunium (strain ATCC 15444).